Here is a 29-residue protein sequence, read N- to C-terminus: MTDTQVFVALLLALVPAVLAYRLGTELYR.

Residues 7 to 24 form a helical membrane-spanning segment; the sequence is FVALLLALVPAVLAYRLG.

The protein belongs to the PsaM family.

It is found in the cellular thylakoid membrane. This chain is Photosystem I reaction center subunit XII, found in Synechococcus sp. (strain ATCC 27144 / PCC 6301 / SAUG 1402/1) (Anacystis nidulans).